Reading from the N-terminus, the 223-residue chain is Putative thymidylate synthase (223 aa).

C146 is an active-site residue.

Belongs to the thymidylate synthase family. Archaeal-type ThyA subfamily. In terms of assembly, monomer.

It is found in the cytoplasm. It functions in the pathway pyrimidine metabolism; dTTP biosynthesis. Functionally, may catalyze the biosynthesis of dTMP using an unknown cosubstrate. In vitro, also catalyzes the dehalogenation of 5-bromo-deoxyuridine monophosphate (Br-dUMP) and the tritium exchange of [5-3H]deoxyuridine monophosphate ([5-3H]dUMP). This is Putative thymidylate synthase (thyA) from Methanothermobacter marburgensis (strain ATCC BAA-927 / DSM 2133 / JCM 14651 / NBRC 100331 / OCM 82 / Marburg) (Methanobacterium thermoautotrophicum).